Reading from the N-terminus, the 259-residue chain is Enkurin (259 aa).

Disordered regions lie at residues 1–26 (MVAM…EPPQ) and 76–98 (PPKK…TDHP). A compositionally biased stretch (basic and acidic residues) spans 76–88 (PPKKKFEWNERRK). The SH3-binding signature appears at 86–92 (RRKPPVP). The 93-residue stretch at 163-255 (KRNEEVKKAQ…VLEKHKVIYI (93 aa)) folds into the Enkurin domain. The segment at 163–258 (KRNEEVKKAQ…KHKVIYIANK (96 aa)) is interaction with TRPC proteins. In terms of domain architecture, IQ spans 179–190 (IQENLRKAAMKR).

As to quaternary structure, microtubule inner protein component of sperm flagellar doublet microtubules. Binds calmodulin via its IQ domain. Interacts with TRPC1, TRPC2, TRPC5, but not TRPC3. Interacts with CFAP45. Expressed in trachea multiciliated cells.

The protein localises to the cytoplasm. The protein resides in the cytoskeleton. It is found in the flagellum axoneme. It localises to the cilium axoneme. In terms of biological role, adapter that functions to localize a calcium-sensitive signal transduction machinery in sperm to a calcium-permeable ion channel. Microtubule inner protein (MIP) part of the dynein-decorated doublet microtubules (DMTs) in cilia axoneme, which is required for motile cilia beating. In Bos taurus (Bovine), this protein is Enkurin (ENKUR).